We begin with the raw amino-acid sequence, 236 residues long: 2-C-methyl-D-erythritol 4-phosphate cytidylyltransferase (236 aa).

This sequence belongs to the IspD/TarI cytidylyltransferase family. IspD subfamily. As to quaternary structure, homodimer.

It catalyses the reaction 2-C-methyl-D-erythritol 4-phosphate + CTP + H(+) = 4-CDP-2-C-methyl-D-erythritol + diphosphate. The protein operates within isoprenoid biosynthesis; isopentenyl diphosphate biosynthesis via DXP pathway; isopentenyl diphosphate from 1-deoxy-D-xylulose 5-phosphate: step 2/6. Catalyzes the formation of 4-diphosphocytidyl-2-C-methyl-D-erythritol from CTP and 2-C-methyl-D-erythritol 4-phosphate (MEP). This chain is 2-C-methyl-D-erythritol 4-phosphate cytidylyltransferase, found in Klebsiella pneumoniae subsp. pneumoniae (strain ATCC 700721 / MGH 78578).